A 140-amino-acid polypeptide reads, in one-letter code: uncharacterized protein (140 aa).

The segment at 34–88 (PLRWRNRARNREKPHSPRAVSSPATHSLPPSNPCRLTPTLSSARPREGSCPSKCS) is disordered.

In terms of tissue distribution, expressed in a range of cell lines, including B-cell lymphoma and prostate.

This is an uncharacterized protein from Homo sapiens (Human).